A 141-amino-acid chain; its full sequence is Cystatin (141 aa).

A signal peptide spans 1–26 (MLHSQLPVAAPLRLLCALLLLPSVTM). Residues 29 to 129 (GGLSPRSVTD…CRFQVWSRPW (101 aa)) form the Cystatin domain. The Secondary area of contact motif lies at 73-77 (QVVTG). 2 disulfides stabilise this stretch: Cys91-Cys107 and Cys120-Cys140.

This sequence belongs to the cystatin family. As to expression, expressed at a low level by the venom gland (at protein level).

The protein localises to the secreted. Inhibits various C1 cysteine proteases including cathepsin L, papain and cathepsin B. This protein has no toxic activity and its function in the venom is unknown. It may play a role as a housekeeping or regulatory protein. In Hoplocephalus stephensii (Stephens's banded snake), this protein is Cystatin.